The following is a 123-amino-acid chain: Probable cytochrome c 2.2 (123 aa).

Positions 1–21 (MGKKKSDTASGGAIPEGDNEK) are disordered. 4 residues coordinate heme c: Cys30, Cys33, His34, and Met95.

It belongs to the cytochrome c family. Post-translationally, binds 1 heme c group covalently per subunit.

It is found in the mitochondrion intermembrane space. In terms of biological role, electron carrier protein. The oxidized form of the cytochrome c heme group can accept an electron from the heme group of the cytochrome c1 subunit of cytochrome reductase. Cytochrome c then transfers this electron to the cytochrome oxidase complex, the final protein carrier in the mitochondrial electron-transport chain. The protein is Probable cytochrome c 2.2 (cyc-2.2) of Caenorhabditis elegans.